The following is a 1013-amino-acid chain: GTPase-activating protein BEM3 (1013 aa).

Disordered stretches follow at residues 90 to 197 (TVVE…GSPA), 258 to 277 (GSRYDTERAGGPGPLSPESI), 282 to 301 (SDLQEHQPSDLSSTTRTDLG), and 307 to 421 (VDTT…HQSK). The span at 143–160 (QEATSGAQQVPLLTSSKS) shows a compositional bias: polar residues. Composition is skewed to polar residues over residues 309 to 319 (TTFNAEDNPTG), 333 to 388 (TLQN…TSSN), and 404 to 418 (KSYSQHSGSPHSNSH). One can recognise a PH domain in the interval 555–662 (EFAKEGMLLV…WISVLTTLCD (108 aa)). The tract at residues 702-726 (AMDATSPTRPNDPNPVSLTSEEEKE) is disordered. Over residues 706-720 (TSPTRPNDPNPVSLT) the composition is skewed to polar residues. The 215-residue stretch at 799–1013 (LQLSSHPYQG…PPVNIHIPQI (215 aa)) folds into the Rho-GAP domain.

Its subcellular location is the cytoplasm. In terms of biological role, GTPase-activating protein (GAP) for CDC42 and less efficiently for RHO1. Negative regulator of the pheromone-response pathway through the STE20 protein kinase. The chain is GTPase-activating protein BEM3 (BEM3) from Eremothecium gossypii (strain ATCC 10895 / CBS 109.51 / FGSC 9923 / NRRL Y-1056) (Yeast).